Reading from the N-terminus, the 510-residue chain is ATP synthase subunit alpha 1 (510 aa).

167-174 contacts ATP; that stretch reads GDRATGKT.

This sequence belongs to the ATPase alpha/beta chains family. In terms of assembly, F-type ATPases have 2 components, CF(1) - the catalytic core - and CF(0) - the membrane proton channel. CF(1) has five subunits: alpha(3), beta(3), gamma(1), delta(1), epsilon(1). CF(0) has three main subunits: a(1), b(2) and c(9-12). The alpha and beta chains form an alternating ring which encloses part of the gamma chain. CF(1) is attached to CF(0) by a central stalk formed by the gamma and epsilon chains, while a peripheral stalk is formed by the delta and b chains.

It localises to the cell inner membrane. It catalyses the reaction ATP + H2O + 4 H(+)(in) = ADP + phosphate + 5 H(+)(out). Produces ATP from ADP in the presence of a proton gradient across the membrane. The alpha chain is a regulatory subunit. The protein is ATP synthase subunit alpha 1 of Paraburkholderia xenovorans (strain LB400).